Reading from the N-terminus, the 960-residue chain is Leucine-rich repeat receptor-like serine/threonine-protein kinase SKM1 (960 aa).

Positions 1-29 (MSTSHHHHHPPYLITTLFFLFLNFSCLHA) are cleaved as a signal peptide. Topologically, residues 30 to 634 (NELELLLSFK…VRKRSTKSWW (605 aa)) are extracellular. A disulfide bond links C61 and C68. N-linked (GlcNAc...) asparagine glycosylation is found at N70, N83, N103, N108, N129, and N134. LRR repeat units lie at residues 71–96 (ISRVVSLDLSGKNMSGQILTAATFRL), 97–120 (PFLQTINLSNNNLSGPIPHDIFTT), 122–146 (SPSLRYLNLSNNNFSGSIPRGFLPN), 149–168 (TLDLSNNMFTGEIYNDIGVF), 169–194 (SNLRVLDLGGNVLTGHVPGYLGNLSR), 196–216 (EFLTLASNQLTGGVPVELGKM), 217–240 (KNLKWIYLGYNNLSGEIPYQIGGL), 241–264 (SSLNHLDLVYNNLSGPIPPSLGDL), 265–288 (KKLEYMFLYQNKLSGQIPPSIFSL), 290–312 (NLISLDFSDNSLSGEIPELVAQM), 313–336 (QSLEILHLFSNNLTGKIPEGVTSL), 338–360 (RLKVLQLWSNRFSGGIPANLGKH), 361–384 (NNLTVLDLSTNNLTGKLPDTLCDS), 386–408 (HLTKLILFSNSLDSQIPPSLGMC), 409–432 (QSLERVRLQNNGFSGKLPRGFTKL), 434–454 (LVNFLDLSNNNLQGNINTWDM), 455–477 (PQLEMLDLSVNKFFGELPDFSRS), 478–501 (KRLKKLDLSRNKISGVVPQGLMTF), 503–525 (EIMDLDLSENEITGVIPRELSSC), 526–549 (KNLVNLDLSHNNFTGEIPSSFAEF), 550–573 (QVLSDLDLSCNQLSGEIPKNLGNI), and 575–598 (SLVQVNISHNLLHGSLPFTGAFLA). N-linked (GlcNAc...) asparagine glycosylation occurs at N191. Residues 221-226 (WIYLGY) carry the CLE45 peptide binding motif. N-linked (GlcNAc...) asparagine glycans are attached at residues N228 and N252. N324 carries an N-linked (GlcNAc...) asparagine glycan. N-linked (GlcNAc...) asparagine glycosylation is found at N362 and N372. An N-linked (GlcNAc...) asparagine glycan is attached at N537. N-linked (GlcNAc...) asparagine glycans are attached at residues N580 and N600. Residues 635–655 (LIITSTFAAFLAVLVSGFFIV) form a helical membrane-spanning segment. Residues 656–960 (LVFQRTHNVL…TYLSKILSLA (305 aa)) lie on the Cytoplasmic side of the membrane. The Protein kinase domain maps to 691-953 (FTVNTILSSL…SSSSSCTTYL (263 aa)). The residue at position 692 (T692) is a Phosphothreonine. Residues 697–705 (LSSLKDQNV) and K717 contribute to the ATP site. The residue at position 834 (Y834) is a Phosphotyrosine.

The protein belongs to the protein kinase superfamily. Ser/Thr protein kinase family. Self-interacts. Binds to CLE45 present in the pistil, particularly under relatively high temperature (at 30 degrees Celsius). As to expression, expressed in pollen grains and roots vascular tissues. Present in roots.

The protein resides in the cell membrane. The catalysed reaction is L-seryl-[protein] + ATP = O-phospho-L-seryl-[protein] + ADP + H(+). It catalyses the reaction L-threonyl-[protein] + ATP = O-phospho-L-threonyl-[protein] + ADP + H(+). Its function is as follows. Receptor with a serine/threonine-protein kinase activity. Together with SKM2, LRR-rich receptor-like kinase (LRR-RLK) required for male fertility by the perception of CLE43 and CLE45 peptides and the transduction of their promoting action in pollen tubes, especially under relatively high temperature (at 30 degrees Celsius), thus conferring tolerance against high temperature probably through the maintenance of mitochondrial activity. Seems to not be involved in the perception of CLE45 peptide in roots. The protein is Leucine-rich repeat receptor-like serine/threonine-protein kinase SKM1 of Arabidopsis thaliana (Mouse-ear cress).